Reading from the N-terminus, the 129-residue chain is Aldose 1-epimerase (129 aa).

The protein belongs to the aldose epimerase family.

The enzyme catalyses alpha-D-glucose = beta-D-glucose. It functions in the pathway carbohydrate metabolism; hexose metabolism. Functionally, mutarotase converts alpha-aldose to the beta-anomer. It is active on D-glucose, L-arabinose, D-xylose, D-galactose, maltose and lactose. This is Aldose 1-epimerase (galM) from Lactobacillus helveticus (Lactobacillus suntoryeus).